A 302-amino-acid polypeptide reads, in one-letter code: Glycine--tRNA ligase alpha subunit (302 aa).

This sequence belongs to the class-II aminoacyl-tRNA synthetase family. In terms of assembly, tetramer of two alpha and two beta subunits.

The protein resides in the cytoplasm. The enzyme catalyses tRNA(Gly) + glycine + ATP = glycyl-tRNA(Gly) + AMP + diphosphate. The polypeptide is Glycine--tRNA ligase alpha subunit (Edwardsiella ictaluri (strain 93-146)).